The sequence spans 229 residues: Uracil-DNA glycosylase (229 aa).

The active-site Proton acceptor is the Asp-64.

Belongs to the uracil-DNA glycosylase (UDG) superfamily. UNG family.

It is found in the cytoplasm. The catalysed reaction is Hydrolyzes single-stranded DNA or mismatched double-stranded DNA and polynucleotides, releasing free uracil.. Excises uracil residues from the DNA which can arise as a result of misincorporation of dUMP residues by DNA polymerase or due to deamination of cytosine. This chain is Uracil-DNA glycosylase, found in Escherichia coli O45:K1 (strain S88 / ExPEC).